A 419-amino-acid chain; its full sequence is Pyrophosphate--fructose 6-phosphate 1-phosphotransferase (419 aa).

Position 12 (G12) interacts with diphosphate. D107 contacts Mg(2+). Substrate contacts are provided by residues 132-134 (TID), 178-180 (MGR), E238, and 300-303 (YELR). The active-site Proton acceptor is D134.

The protein belongs to the phosphofructokinase type A (PFKA) family. PPi-dependent PFK group II subfamily. Clade 'Short' sub-subfamily. Homodimer. The cofactor is Mg(2+). Co(2+) serves as cofactor. Mn(2+) is required as a cofactor. Requires Ni(2+) as cofactor.

The protein resides in the cytoplasm. It carries out the reaction beta-D-fructose 6-phosphate + diphosphate = beta-D-fructose 1,6-bisphosphate + phosphate + H(+). It participates in carbohydrate degradation; glycolysis; D-glyceraldehyde 3-phosphate and glycerone phosphate from D-glucose: step 3/4. With respect to regulation, non-allosteric. In terms of biological role, catalyzes the phosphorylation of D-fructose 6-phosphate, the first committing step of glycolysis. Uses inorganic phosphate (PPi) as phosphoryl donor instead of ATP like common ATP-dependent phosphofructokinases (ATP-PFKs), which renders the reaction reversible, and can thus function both in glycolysis and gluconeogenesis. Consistently, PPi-PFK can replace the enzymes of both the forward (ATP-PFK) and reverse (fructose-bisphosphatase (FBPase)) reactions. This Thermotoga maritima (strain ATCC 43589 / DSM 3109 / JCM 10099 / NBRC 100826 / MSB8) protein is Pyrophosphate--fructose 6-phosphate 1-phosphotransferase.